Here is a 394-residue protein sequence, read N- to C-terminus: Acetyl-CoA acetyltransferase (394 aa).

The active-site Acyl-thioester intermediate is Cys-88. Active-site proton acceptor residues include His-349 and Cys-379.

It belongs to the thiolase-like superfamily. Thiolase family.

It localises to the cytoplasm. It catalyses the reaction 2 acetyl-CoA = acetoacetyl-CoA + CoA. The protein operates within metabolic intermediate biosynthesis; (R)-mevalonate biosynthesis; (R)-mevalonate from acetyl-CoA: step 1/3. This Escherichia coli (strain K12) protein is Acetyl-CoA acetyltransferase (atoB).